Consider the following 103-residue polypeptide: MHVKKDDIVVVISGKDKGKKGKILHAIPKKERIIVEGVNMVTKHQKPTQQSQQGGIIKQEAAIHVSNVLLWDKKANQGVRAGHKVLENGEKVRVSKKTGEVLD.

This sequence belongs to the universal ribosomal protein uL24 family. In terms of assembly, part of the 50S ribosomal subunit.

Functionally, one of two assembly initiator proteins, it binds directly to the 5'-end of the 23S rRNA, where it nucleates assembly of the 50S subunit. In terms of biological role, one of the proteins that surrounds the polypeptide exit tunnel on the outside of the subunit. The chain is Large ribosomal subunit protein uL24 from Alkaliphilus metalliredigens (strain QYMF).